Here is a 648-residue protein sequence, read N- to C-terminus: Macrolide export ATP-binding/permease protein MacB (648 aa).

One can recognise an ABC transporter domain in the interval 5 to 243 (LELCNVSRSY…QGVDAAVVNT (239 aa)). 41–48 (GVSGSGKS) is an ATP binding site. Helical transmembrane passes span 273–293 (LLTMLGIIIGIASVVSIVVVG), 417–437 (ANVVGEVVLVGNMPVIVIGVA), 523–543 (LFLTLVAVISLVVGGIGVMNI), 578–598 (LVCLVGGALGISLSMFIAFML), and 611–631 (LTALASAFLCSTFTGILFGWL).

Belongs to the ABC transporter superfamily. Macrolide exporter (TC 3.A.1.122) family. In terms of assembly, homodimer. Part of the tripartite efflux system MacAB-TolC, which is composed of an inner membrane transporter, MacB, a periplasmic membrane fusion protein, MacA, and an outer membrane component, TolC. The complex forms a large protein conduit and can translocate molecules across both the inner and outer membranes. Interacts with MacA.

It localises to the cell inner membrane. In terms of biological role, part of the tripartite efflux system MacAB-TolC. MacB is a non-canonical ABC transporter that contains transmembrane domains (TMD), which form a pore in the inner membrane, and an ATP-binding domain (NBD), which is responsible for energy generation. Confers resistance against macrolides. The protein is Macrolide export ATP-binding/permease protein MacB of Salmonella paratyphi A (strain ATCC 9150 / SARB42).